Reading from the N-terminus, the 218-residue chain is Large ribosomal subunit protein uL3 (218 aa).

N5-methylglutamine is present on glutamine 153.

This sequence belongs to the universal ribosomal protein uL3 family. As to quaternary structure, part of the 50S ribosomal subunit. Forms a cluster with proteins L14 and L19. In terms of processing, methylated by PrmB.

In terms of biological role, one of the primary rRNA binding proteins, it binds directly near the 3'-end of the 23S rRNA, where it nucleates assembly of the 50S subunit. In Alkalilimnicola ehrlichii (strain ATCC BAA-1101 / DSM 17681 / MLHE-1), this protein is Large ribosomal subunit protein uL3.